Consider the following 124-residue polypeptide: Small ribosomal subunit protein bS16 (124 aa).

Residues 82–124 (LAKRPARSNPTKAVPGKKAQERAAEAKQKAEDAAAAAAESAAE) are disordered. A compositionally biased stretch (basic and acidic residues) spans 99–113 (KAQERAAEAKQKAED). A compositionally biased stretch (low complexity) spans 114-124 (AAAAAAESAAE).

The protein belongs to the bacterial ribosomal protein bS16 family.

This is Small ribosomal subunit protein bS16 from Sinorhizobium fredii (strain NBRC 101917 / NGR234).